Consider the following 137-residue polypeptide: Large ribosomal subunit protein uL16 (137 aa).

Belongs to the universal ribosomal protein uL16 family. In terms of assembly, part of the 50S ribosomal subunit.

Its function is as follows. Binds 23S rRNA and is also seen to make contacts with the A and possibly P site tRNAs. The sequence is that of Large ribosomal subunit protein uL16 from Bartonella tribocorum (strain CIP 105476 / IBS 506).